The primary structure comprises 544 residues: Glycoprotein gp100 (544 aa).

Positions 1–19 are cleaved as a signal peptide; that stretch reads MKNFILLVFLFLLVSNSLG. At 20–489 the chain is on the extracellular side; that stretch reads KSNKKDDQSP…SGGGGNKKLY (470 aa). N-linked (GlcNAc...) asparagine glycosylation occurs at Asn-80. A compositionally biased stretch (polar residues) spans 84–99; it reads EPQNNPIPTVSINPDQ. The interval 84–215 is disordered; the sequence is EPQNNPIPTV…TPTRPSSSVS (132 aa). Low complexity-rich tracts occupy residues 126 to 142, 150 to 165, and 189 to 199; these read SKPT…TIPP, PQTT…TPTP, and PKPTKSSKPTK. Asn-224, Asn-308, Asn-332, Asn-366, Asn-380, Asn-410, Asn-422, and Asn-478 each carry an N-linked (GlcNAc...) asparagine glycan. The segment at 444–480 is disordered; it reads KPSTTDDDNNKNNDDGDSEIDSVGKSAVDSSKSNNNS. The chain crosses the membrane as a helical span at residues 490-510; the sequence is LLIILPTVLFIIVAALVAIFI. Over 511–544 the chain is Cytoplasmic; that stretch reads KTRVSQNSGSKVNKNNNKKDSINVPFQMLDEITT.

In terms of processing, N- and O-glycosylated.

The protein localises to the membrane. The chain is Glycoprotein gp100 (gppA) from Dictyostelium discoideum (Social amoeba).